A 348-amino-acid polypeptide reads, in one-letter code: RNA 3'-terminal phosphate cyclase (348 aa).

Residues Q102 and 285–288 (HMGD) contribute to the ATP site. The active-site Tele-AMP-histidine intermediate is H311.

It belongs to the RNA 3'-terminal cyclase family. Type 1 subfamily.

The protein resides in the cytoplasm. The catalysed reaction is a 3'-end 3'-phospho-ribonucleotide-RNA + ATP = a 3'-end 2',3'-cyclophospho-ribonucleotide-RNA + AMP + diphosphate. In terms of biological role, catalyzes the conversion of 3'-phosphate to a 2',3'-cyclic phosphodiester at the end of RNA. The mechanism of action of the enzyme occurs in 3 steps: (A) adenylation of the enzyme by ATP; (B) transfer of adenylate to an RNA-N3'P to produce RNA-N3'PP5'A; (C) and attack of the adjacent 2'-hydroxyl on the 3'-phosphorus in the diester linkage to produce the cyclic end product. The biological role of this enzyme is unknown but it is likely to function in some aspects of cellular RNA processing. This is RNA 3'-terminal phosphate cyclase from Korarchaeum cryptofilum (strain OPF8).